The following is a 92-amino-acid chain: Probable Fe(2+)-trafficking protein (92 aa).

It belongs to the Fe(2+)-trafficking protein family.

Could be a mediator in iron transactions between iron acquisition and iron-requiring processes, such as synthesis and/or repair of Fe-S clusters in biosynthetic enzymes. This Anaeromyxobacter sp. (strain Fw109-5) protein is Probable Fe(2+)-trafficking protein.